Reading from the N-terminus, the 165-residue chain is Xanthine-guanine phosphoribosyltransferase (165 aa).

5-phospho-alpha-D-ribose 1-diphosphate-binding positions include 41-42 and 98-106; these read RG and DDLTDTGKT. D99 serves as a coordination point for Mg(2+). 2 residues coordinate guanine: D102 and I145. Xanthine-binding residues include D102 and I145. GMP is bound by residues 102-106 and 144-145; these read DTGKT and WI.

It belongs to the purine/pyrimidine phosphoribosyltransferase family. XGPT subfamily. As to quaternary structure, homotetramer. Mg(2+) is required as a cofactor.

It localises to the cell inner membrane. It catalyses the reaction GMP + diphosphate = guanine + 5-phospho-alpha-D-ribose 1-diphosphate. It carries out the reaction XMP + diphosphate = xanthine + 5-phospho-alpha-D-ribose 1-diphosphate. The enzyme catalyses IMP + diphosphate = hypoxanthine + 5-phospho-alpha-D-ribose 1-diphosphate. It participates in purine metabolism; GMP biosynthesis via salvage pathway; GMP from guanine: step 1/1. It functions in the pathway purine metabolism; XMP biosynthesis via salvage pathway; XMP from xanthine: step 1/1. Functionally, purine salvage pathway enzyme that catalyzes the transfer of the ribosyl-5-phosphate group from 5-phospho-alpha-D-ribose 1-diphosphate (PRPP) to the N9 position of the 6-oxopurines guanine and xanthine to form the corresponding ribonucleotides GMP (guanosine 5'-monophosphate) and XMP (xanthosine 5'-monophosphate), with the release of PPi. To a lesser extent, also acts on hypoxanthine. This is Xanthine-guanine phosphoribosyltransferase from Agrobacterium fabrum (strain C58 / ATCC 33970) (Agrobacterium tumefaciens (strain C58)).